A 502-amino-acid chain; its full sequence is Smr domain-containing protein C1235.03 (502 aa).

Residues 150 to 184 (LITSNIGHRSRQRKKKTKKATNSRKPLSKFQSNTE) are disordered. Positions 157–171 (HRSRQRKKKTKKATN) are enriched in basic residues. Residues 411-459 (SLDLHGATVREAKTIVRERVAAWWAKEADTSPNSIRPFVIVTGRGNHSI) enclose the Smr domain.

The protein resides in the nucleus. The protein localises to the nucleolus. In Schizosaccharomyces pombe (strain 972 / ATCC 24843) (Fission yeast), this protein is Smr domain-containing protein C1235.03.